The primary structure comprises 361 residues: Peptide chain release factor 1 (361 aa).

Residue Gln237 is modified to N5-methylglutamine. Over residues 285–296 (DEKRRSAEESTR) the composition is skewed to basic and acidic residues. Residues 285 to 305 (DEKRRSAEESTRRNLVSSGDR) are disordered.

This sequence belongs to the prokaryotic/mitochondrial release factor family. Post-translationally, methylated by PrmC. Methylation increases the termination efficiency of RF1.

It localises to the cytoplasm. Its function is as follows. Peptide chain release factor 1 directs the termination of translation in response to the peptide chain termination codons UAG and UAA. In Shewanella halifaxensis (strain HAW-EB4), this protein is Peptide chain release factor 1.